The following is a 157-amino-acid chain: Phosphopantetheine adenylyltransferase (157 aa).

Ser-9 provides a ligand contact to substrate. Residues 9–10 (SF) and His-17 each bind ATP. Substrate-binding residues include Lys-41, Leu-73, and Lys-87. ATP-binding positions include 88-90 (GLR), Glu-98, and 123-129 (YSFLSSS).

The protein belongs to the bacterial CoaD family. As to quaternary structure, homohexamer. Mg(2+) is required as a cofactor.

The protein resides in the cytoplasm. The catalysed reaction is (R)-4'-phosphopantetheine + ATP + H(+) = 3'-dephospho-CoA + diphosphate. It functions in the pathway cofactor biosynthesis; coenzyme A biosynthesis; CoA from (R)-pantothenate: step 4/5. Reversibly transfers an adenylyl group from ATP to 4'-phosphopantetheine, yielding dephospho-CoA (dPCoA) and pyrophosphate. The sequence is that of Phosphopantetheine adenylyltransferase from Alkaliphilus oremlandii (strain OhILAs) (Clostridium oremlandii (strain OhILAs)).